Consider the following 205-residue polypeptide: Methylamine utilization protein MauD (205 aa).

The helical transmembrane segment at 5 to 25 threads the bilayer; the sequence is IMIASNVLLWGAFLALAALML. The Thioredoxin domain occupies 50 to 184; sequence PDIGERSPVF…VESLFETTRV (135 aa).

Its subcellular location is the membrane. The protein operates within one-carbon metabolism; methylamine degradation. May be specifically involved in the processing, transport, and/or maturation of the MADH beta-subunit. This is Methylamine utilization protein MauD (mauD) from Methylobacillus flagellatus (strain ATCC 51484 / DSM 6875 / VKM B-1610 / KT).